Reading from the N-terminus, the 406-residue chain is Putative cfxQ-like protein R730 (406 aa).

The tract at residues 1-37 is disordered; that stretch reads MKRSHDSITRSINSDNDSETNMNSDNNNNNKPNQRKK. Residues 13 to 32 show a composition bias toward low complexity; sequence NSDNDSETNMNSDNNNNNKP. 173 to 180 provides a ligand contact to ATP; the sequence is GPPGVGKS.

The protein belongs to the CbxX/CfxQ family.

The polypeptide is Putative cfxQ-like protein R730 (Acanthamoeba polyphaga mimivirus (APMV)).